The chain runs to 276 residues: MIKIGSHVRFRKPDYLFGAIQESLENKANAAMIFLGPPQSTFRVKPENYKFQDYQKHFFKQIPPEDIIVHAPYIINPASPIKAQFSNDFLVKEIEKINYIGAKFLVLHPGFFTSFTKEVAKKQLISSLKSILEKTKNVILLLETMSGKGSEMCANFEEIVEIVEAVESPRIGVCLDTCHVWDAGYDLKNFPEFCKELRKTRLINYLKVIHLNDSLSPLGSKKDRHANIGKGFIGLETLRKIVFDPLFANIPKILETPYVDNKPIYDQEIALLLKKV.

Positions 70, 108, 143, 176, 179, 210, 223, 225, and 255 each coordinate Zn(2+).

Belongs to the AP endonuclease 2 family. It depends on Zn(2+) as a cofactor.

The enzyme catalyses Endonucleolytic cleavage to 5'-phosphooligonucleotide end-products.. Endonuclease IV plays a role in DNA repair. It cleaves phosphodiester bonds at apurinic or apyrimidinic (AP) sites, generating a 3'-hydroxyl group and a 5'-terminal sugar phosphate. This is Probable endonuclease 4 from Mesomycoplasma hyopneumoniae (strain 7448) (Mycoplasma hyopneumoniae).